The primary structure comprises 288 residues: Glucose-1-phosphate thymidylyltransferase (288 aa).

Mg(2+) is bound by residues Asp108 and Asp223.

Belongs to the glucose-1-phosphate thymidylyltransferase family. In terms of assembly, homotetramer. Mg(2+) is required as a cofactor.

The enzyme catalyses dTTP + alpha-D-glucose 1-phosphate + H(+) = dTDP-alpha-D-glucose + diphosphate. Functionally, catalyzes the formation of dTDP-glucose, from dTTP and glucose 1-phosphate, as well as its pyrophosphorolysis. The sequence is that of Glucose-1-phosphate thymidylyltransferase (rmlA1) from Neisseria meningitidis serogroup A / serotype 4A (strain DSM 15465 / Z2491).